A 408-amino-acid chain; its full sequence is Imidazolonepropionase (408 aa).

Residues His-66 and His-68 each coordinate Fe(3+). Residues His-66 and His-68 each coordinate Zn(2+). Residues Arg-75, Tyr-138, and His-171 each contribute to the 4-imidazolone-5-propanoate site. Tyr-138 is a binding site for N-formimidoyl-L-glutamate. Fe(3+) is bound at residue His-236. His-236 is a binding site for Zn(2+). Gln-239 is a 4-imidazolone-5-propanoate binding site. Residue Asp-311 participates in Fe(3+) binding. Asp-311 lines the Zn(2+) pocket. Asn-313 and Gly-315 together coordinate N-formimidoyl-L-glutamate. Ser-316 contacts 4-imidazolone-5-propanoate.

It belongs to the metallo-dependent hydrolases superfamily. HutI family. The cofactor is Zn(2+). Fe(3+) serves as cofactor.

The protein resides in the cytoplasm. It catalyses the reaction 4-imidazolone-5-propanoate + H2O = N-formimidoyl-L-glutamate. Its pathway is amino-acid degradation; L-histidine degradation into L-glutamate; N-formimidoyl-L-glutamate from L-histidine: step 3/3. Catalyzes the hydrolytic cleavage of the carbon-nitrogen bond in imidazolone-5-propanoate to yield N-formimidoyl-L-glutamate. It is the third step in the universal histidine degradation pathway. The sequence is that of Imidazolonepropionase from Idiomarina loihiensis (strain ATCC BAA-735 / DSM 15497 / L2-TR).